A 350-amino-acid polypeptide reads, in one-letter code: Protein RecA (350 aa).

An ATP-binding site is contributed by 67-74 (GPESSGKT).

This sequence belongs to the RecA family.

Its subcellular location is the cytoplasm. In terms of biological role, can catalyze the hydrolysis of ATP in the presence of single-stranded DNA, the ATP-dependent uptake of single-stranded DNA by duplex DNA, and the ATP-dependent hybridization of homologous single-stranded DNAs. It interacts with LexA causing its activation and leading to its autocatalytic cleavage. The chain is Protein RecA from Wolinella succinogenes (strain ATCC 29543 / DSM 1740 / CCUG 13145 / JCM 31913 / LMG 7466 / NCTC 11488 / FDC 602W) (Vibrio succinogenes).